The chain runs to 349 residues: GTPase Obg (349 aa).

The Obg domain occupies 1-159 (MKFLDEAKVY…RWIWLRLKLI (159 aa)). In terms of domain architecture, OBG-type G spans 160-327 (ADAGLVGLPN…ALRALVAVIG (168 aa)). Residues 166 to 173 (GLPNAGKS), 191 to 195 (FTTLH), 212 to 215 (DIPG), 279 to 282 (NKID), and 308 to 310 (SGV) contribute to the GTP site. Residues Ser-173 and Thr-193 each coordinate Mg(2+).

The protein belongs to the TRAFAC class OBG-HflX-like GTPase superfamily. OBG GTPase family. As to quaternary structure, monomer. Requires Mg(2+) as cofactor.

The protein resides in the cytoplasm. Functionally, an essential GTPase which binds GTP, GDP and possibly (p)ppGpp with moderate affinity, with high nucleotide exchange rates and a fairly low GTP hydrolysis rate. Plays a role in control of the cell cycle, stress response, ribosome biogenesis and in those bacteria that undergo differentiation, in morphogenesis control. This is GTPase Obg from Rhodopseudomonas palustris (strain BisA53).